Here is a 446-residue protein sequence, read N- to C-terminus: Exodeoxyribonuclease 7 large subunit (446 aa).

This sequence belongs to the XseA family. As to quaternary structure, heterooligomer composed of large and small subunits.

It localises to the cytoplasm. It carries out the reaction Exonucleolytic cleavage in either 5'- to 3'- or 3'- to 5'-direction to yield nucleoside 5'-phosphates.. Its function is as follows. Bidirectionally degrades single-stranded DNA into large acid-insoluble oligonucleotides, which are then degraded further into small acid-soluble oligonucleotides. The protein is Exodeoxyribonuclease 7 large subunit of Vibrio cholerae serotype O1 (strain ATCC 39541 / Classical Ogawa 395 / O395).